A 500-amino-acid polypeptide reads, in one-letter code: NAD(P)H-quinone oxidoreductase chain 4, chloroplastic (500 aa).

A run of 14 helical transmembrane segments spans residues Phe4–Leu24, Tyr35–Phe55, Phe87–Val107, Leu134–Met154, Phe167–Leu187, Ala208–Ile228, His242–Val262, Ala272–Ala292, Ile305–Asp325, Gly330–Gly350, Met364–Ala384, Leu386–Thr406, Ile416–Met436, and Leu462–Leu482.

Belongs to the complex I subunit 4 family.

It is found in the plastid. Its subcellular location is the chloroplast thylakoid membrane. The catalysed reaction is a plastoquinone + NADH + (n+1) H(+)(in) = a plastoquinol + NAD(+) + n H(+)(out). The enzyme catalyses a plastoquinone + NADPH + (n+1) H(+)(in) = a plastoquinol + NADP(+) + n H(+)(out). This Pelargonium hortorum (Common geranium) protein is NAD(P)H-quinone oxidoreductase chain 4, chloroplastic.